Consider the following 70-residue polypeptide: U-actitoxin-Ael2c (70 aa).

A signal peptide spans 1-21; that stretch reads SYQRFLFLVVVASLIATSLAI. The propeptide occupies 22-26; the sequence is PKDLE. 3 cysteine pairs are disulfide-bonded: cysteine 32/cysteine 65, cysteine 34/cysteine 58, and cysteine 48/cysteine 66.

The protein belongs to the sea anemone type 3 (BDS) potassium channel toxin family.

Its subcellular location is the secreted. It is found in the nematocyst. Its function is as follows. Potently and selectively inhibits voltage-gated potassium channels Kv11/KCNH/ERG. Acts as a gating-modifier toxin that shifts the voltage-dependence of ERG activation in the positive direction and suppresses its current amplitudes elicited by strong depolarizing pulses that maximally activate the channels. The sequence is that of U-actitoxin-Ael2c from Anthopleura elegantissima (Green aggregating anemone).